The chain runs to 521 residues: Protein TESPA1 (521 aa).

Position 311 is a phosphoserine (Ser-311). Residues 331–341 show a composition bias toward polar residues; that stretch reads QQDSDLGQFSQ. 2 disordered regions span residues 331-351 and 461-521; these read QQDS…AEGK and QQKW…GKDS. Residues 466 to 475 are compositionally biased toward basic and acidic residues; sequence QSVDRPELRR. Residues 485–498 are compositionally biased toward acidic residues; the sequence is FDLEEVQSNSEEEQ. Residues 505 to 514 show a composition bias toward basic residues; it reads SRPRHPHHHQ.

In terms of assembly, interacts with PLCG1 and GRB2; the association is increased with prolonged stimulation of the TCR and may facilitate the assembly of the LAT signalosome. Interacts with ITPR1. Also interacts with ITPR3. Interacts with HSPA9. May be phosphorylated in response to store-operated Ca(+2) entry.

It localises to the cytoplasm. Its subcellular location is the endoplasmic reticulum membrane. In terms of biological role, required for the development and maturation of T-cells, its function being essential for the late stages of thymocyte development. Plays a role in T-cell antigen receptor (TCR)-mediated activation of the ERK and NFAT signaling pathways, possibly by serving as a scaffolding protein that promotes the assembly of the LAT signalosome in thymocytes. May play a role in the regulation of inositol 1,4,5-trisphosphate receptor-mediated Ca(2+) release and mitochondrial Ca(2+) uptake via the mitochondria-associated endoplasmic reticulum membrane (MAM) compartment. This chain is Protein TESPA1 (TESPA1), found in Homo sapiens (Human).